We begin with the raw amino-acid sequence, 695 residues long: NADPH--cytochrome P450 reductase (695 aa).

Over 1–8 (MAQLDTLD) the chain is Lumenal. The helical transmembrane segment at 9–31 (VVVLAVLLAGSIAYFTKGTFWAV) threads the bilayer. The Cytoplasmic segment spans residues 32 to 695 (AKDPYASSGP…SGSYQEDVWS (664 aa)). In terms of domain architecture, Flavodoxin-like spans 66–221 (CVIFYGSQTG…DFLAWKEPMW (156 aa)). FMN is bound by residues 72–77 (SQTGTA), 123–126 (ATYG), 169–178 (LGNNTYEHYN), and D204. The FAD-binding FR-type domain maps to 277–538 (HNPYIAPIVE…HVRHSNFKLP (262 aa)). R296 contacts NADP(+). Residues 451-454 (RYYS), 469-471 (TAV), and 486-489 (GVTT) contribute to the FAD site. The segment at 497 to 516 (QKQNGDPSPDPHGQTYAING) is disordered. Residues T552, 614-615 (SR), 620-624 (KVYVQ), and E656 each bind NADP(+). W694 contacts FAD.

Belongs to the NADPH--cytochrome P450 reductase family. This sequence in the N-terminal section; belongs to the flavodoxin family. The protein in the C-terminal section; belongs to the flavoprotein pyridine nucleotide cytochrome reductase family. It depends on FAD as a cofactor. FMN serves as cofactor.

It is found in the endoplasmic reticulum membrane. The protein resides in the mitochondrion outer membrane. It localises to the cell membrane. It carries out the reaction 2 oxidized [cytochrome P450] + NADPH = 2 reduced [cytochrome P450] + NADP(+) + H(+). Its function is as follows. This enzyme is required for electron transfer from NADP to cytochrome P450 in microsomes. It can also provide electron transfer to heme oxygenase and cytochrome B5. Involved in ergosterol biosynthesis. The chain is NADPH--cytochrome P450 reductase from Emericella nidulans (strain FGSC A4 / ATCC 38163 / CBS 112.46 / NRRL 194 / M139) (Aspergillus nidulans).